Here is a 622-residue protein sequence, read N- to C-terminus: Probable potassium transport system protein Kup (622 aa).

The next 12 membrane-spanning stretches (helical) occupy residues 7–27, 44–64, 95–115, 133–153, 165–185, 199–219, 243–263, 290–310, 338–358, 370–390, 395–415, and 422–442; these read LAIGAIGIVFGDIGTSPLYAF, VLGVVSLIFWSMTLIVAIQYV, GWLVVLLGVFATSLFYGDSMI, PELQGFVIPIALVLLVGLFVL, FAPVMIVYFTVIATLGLISIV, AVLFFINDGFLAFLALGSVVL, WFGFVMPCLLLNYFGQGAMIV, LVILATFATFIASQAVISGAF, IYIPVINWALMVAVILLVLTF, IAVTGAVTIDTLLMAVLLVGV, WYYAAPVVIVFLIIDGAYFAA, and DGGWFPLVVGLIVFTLLTTWA.

It belongs to the HAK/KUP transporter (TC 2.A.72) family.

It is found in the cell inner membrane. It carries out the reaction K(+)(in) + H(+)(in) = K(+)(out) + H(+)(out). In terms of biological role, transport of potassium into the cell. Likely operates as a K(+):H(+) symporter. This chain is Probable potassium transport system protein Kup, found in Erythrobacter litoralis (strain HTCC2594).